A 114-amino-acid chain; its full sequence is UPF0757 protein YmgG (114 aa).

This sequence belongs to the UPF0757 family.

The sequence is that of UPF0757 protein YmgG from Shigella flexneri.